The primary structure comprises 745 residues: MSLITRLLTGNNTLRLRALKSLGKAGYSSHAKFSEHKPIERIRNIGISAHIDSGKTTLTERILFYTGRIAEMHEVRGKDNVGATMDSMELERQRGITIQSAATYTLWKDTNINIIDTPGHVDFTVEVERALRVLDGAVLVLCAVGGVQSQTLTVNRQMKRYNVPCLAFINKLDRLGSNPYRVLSQMRSKMNHNAAFIQLPIGVESNCKGIVDLVREKAIYFEGEHGMDIRLDEIPQDMRVESLERRQELIEHLSNADETLGELFLEEKPFTEDDIKAALRRTCINRTFTPVLVGTALKNKGVQPLLDAVLDYLPNPGEVENLGFIEKEGQDPEKVVLNPARDGKDPFVGLAFKLEAGRFGQLTYLRCYQGVLRKGDNIFNARTNKKVRIARLVRLHSNQMEDVNEVYAGDIFALFGVDCASGDTFTTNPKNNLSMESIFVPEPVVSMAIKPNNTKDRDNFSKAIARFTKEDPTFHFFFDNDVKETLVSGMGELHLEIYAQRMEREYGCPVTLGKPKVAFRETLVGPCEFDYLHKKQSGGSGQYARIIGVMEPLPPNQNTLLEFVDETVGTNVPKQFVPGVEKGYREMAEKGMLSGHKLSGIRFRLQDGGHHIVDSSELAFMLAAHGAIKEVFQNGSWQILEPIMLVEVTAPEEFQGAVMGHLSKRHGIITGTEGTEGWFTVYAEVPLNDMFGYAGELRSSTQGKGEFTMEYSRYSPCLPDVQDQIVRQYQESQGLAQPDKKKKKN.

Positions 40–317 (ERIRNIGISA…AVLDYLPNPG (278 aa)) constitute a tr-type G domain. GTP contacts are provided by residues 49–56 (AHIDSGKT), 116–120 (DTPGH), and 170–173 (NKLD).

It belongs to the TRAFAC class translation factor GTPase superfamily. Classic translation factor GTPase family. EF-G/EF-2 subfamily.

The protein resides in the mitochondrion. The protein operates within protein biosynthesis; polypeptide chain elongation. Its function is as follows. Mitochondrial GTPase that catalyzes the GTP-dependent ribosomal translocation step during translation elongation. During this step, the ribosome changes from the pre-translocational (PRE) to the post-translocational (POST) state as the newly formed A-site-bound peptidyl-tRNA and P-site-bound deacylated tRNA move to the P and E sites, respectively. Catalyzes the coordinated movement of the two tRNA molecules, the mRNA and conformational changes in the ribosome. Essential during development as it acts as a retrograde signal from mitochondria to the nucleus to slow down cell proliferation if mitochondrial energy output is low. The sequence is that of Elongation factor G, mitochondrial from Drosophila melanogaster (Fruit fly).